Here is a 454-residue protein sequence, read N- to C-terminus: Tetrahydroanabasine acetyltransferase (454 aa).

Catalysis depends on proton acceptor residues His-164 and Asp-389.

This sequence belongs to the plant acyltransferase family. In terms of assembly, monomer.

It catalyses the reaction tetrahydroanabasine + acetyl-CoA = ammodendrine + CoA. It participates in alkaloid biosynthesis. Functionally, tetrahydroanabasine acetyltransferase involved in the accumulation of quinolizidine type antinutritional alkaloids (QAs) natural products. QAs impart a bitter taste to plants, acting as repellents and toxicants for herbivores and predators, and possess a variety of pharmacological effects, including sedative, anticonvulsant, anti-inflammatory, antiviral, antitumor, antipyretic, anti-hepatitis B, antifibrotic, antiallergic, antidiarrheal, analgesic and antimicrobial activities. Mediates the conversion of tetrahydroanabasine into ammodendrine. The sequence is that of Tetrahydroanabasine acetyltransferase from Lupinus albus (White lupine).